We begin with the raw amino-acid sequence, 79 residues long: Cell division protein ZapB (79 aa).

Residues 4-78 (EVFEKLEAKV…LRALLGKMEE (75 aa)) adopt a coiled-coil conformation.

The protein belongs to the ZapB family. As to quaternary structure, homodimer. The ends of the coiled-coil dimer bind to each other, forming polymers. Interacts with FtsZ.

Its subcellular location is the cytoplasm. In terms of biological role, non-essential, abundant cell division factor that is required for proper Z-ring formation. It is recruited early to the divisome by direct interaction with FtsZ, stimulating Z-ring assembly and thereby promoting cell division earlier in the cell cycle. Its recruitment to the Z-ring requires functional FtsA or ZipA. The chain is Cell division protein ZapB from Pectobacterium carotovorum subsp. carotovorum (strain PC1).